A 426-amino-acid polypeptide reads, in one-letter code: Serine--tRNA ligase (426 aa).

235-237 lines the L-serine pocket; the sequence is TAE. 266-268 serves as a coordination point for ATP; sequence RRE. Glutamate 289 is a binding site for L-serine. An ATP-binding site is contributed by 353–356; that stretch reads EISS. An L-serine-binding site is contributed by serine 389.

This sequence belongs to the class-II aminoacyl-tRNA synthetase family. Type-1 seryl-tRNA synthetase subfamily. Homodimer. The tRNA molecule binds across the dimer.

It localises to the cytoplasm. It catalyses the reaction tRNA(Ser) + L-serine + ATP = L-seryl-tRNA(Ser) + AMP + diphosphate + H(+). It carries out the reaction tRNA(Sec) + L-serine + ATP = L-seryl-tRNA(Sec) + AMP + diphosphate + H(+). Its pathway is aminoacyl-tRNA biosynthesis; selenocysteinyl-tRNA(Sec) biosynthesis; L-seryl-tRNA(Sec) from L-serine and tRNA(Sec): step 1/1. Its function is as follows. Catalyzes the attachment of serine to tRNA(Ser). Is also able to aminoacylate tRNA(Sec) with serine, to form the misacylated tRNA L-seryl-tRNA(Sec), which will be further converted into selenocysteinyl-tRNA(Sec). This Nostoc sp. (strain PCC 7120 / SAG 25.82 / UTEX 2576) protein is Serine--tRNA ligase.